The chain runs to 507 residues: Peroxisomal catalase (507 aa).

Residues His-65 and Asn-138 contribute to the active site. Tyr-348 provides a ligand contact to heme. Positions 505 to 507 (SKI) match the Microbody targeting signal motif.

This sequence belongs to the catalase family. In terms of assembly, homotetramer. Requires heme as cofactor.

It is found in the peroxisome matrix. The catalysed reaction is 2 H2O2 = O2 + 2 H2O. Its function is as follows. Catalyzes the degradation of hydrogen peroxide (H(2)O(2)) generated by peroxisomal oxidases to water and oxygen, thereby protecting cells from the toxic effects of hydrogen peroxide. The sequence is that of Peroxisomal catalase (PXP9) from Pichia angusta (Yeast).